A 367-amino-acid polypeptide reads, in one-letter code: Glutamate 5-kinase (367 aa).

Lys-10 provides a ligand contact to ATP. 3 residues coordinate substrate: Ser-50, Asp-137, and Asn-149. Residues 169–170 (TD) and 211–217 (TGGMATK) each bind ATP. The PUA domain maps to 275 to 353 (AGELVVDDGA…QQIGEILGYE (79 aa)).

This sequence belongs to the glutamate 5-kinase family.

The protein localises to the cytoplasm. It catalyses the reaction L-glutamate + ATP = L-glutamyl 5-phosphate + ADP. The protein operates within amino-acid biosynthesis; L-proline biosynthesis; L-glutamate 5-semialdehyde from L-glutamate: step 1/2. Catalyzes the transfer of a phosphate group to glutamate to form L-glutamate 5-phosphate. The chain is Glutamate 5-kinase from Erwinia tasmaniensis (strain DSM 17950 / CFBP 7177 / CIP 109463 / NCPPB 4357 / Et1/99).